We begin with the raw amino-acid sequence, 626 residues long: Zinc finger protein 471 (626 aa).

The region spanning Val14–Ser85 is the KRAB domain. 15 consecutive C2H2-type zinc fingers follow at residues Phe206–His228, Tyr234–His256, Phe262–His284, Tyr290–His312, Tyr318–His340, Tyr346–His369, Phe375–His397, Tyr403–His425, Tyr431–His453, Tyr459–His481, Tyr487–His509, Tyr515–His537, Tyr543–His565, Tyr571–His593, and Tyr599–His621.

It belongs to the krueppel C2H2-type zinc-finger protein family.

The protein localises to the nucleus. In terms of biological role, may be involved in transcriptional regulation. This is Zinc finger protein 471 (ZNF471) from Homo sapiens (Human).